We begin with the raw amino-acid sequence, 593 residues long: DNA primase (593 aa).

The CHC2-type zinc-finger motif lies at 38 to 62 (CPFHQEKTPSFTVSDSKRFFYCFGC). Residues 250 to 332 (NRSILVEGYF…EKKISFIRLP (83 aa)) enclose the Toprim domain. Residues E256, D300, and D302 each contribute to the Mg(2+) site.

This sequence belongs to the DnaG primase family. Monomer. Interacts with DnaB. The cofactor is Zn(2+). Mg(2+) serves as cofactor.

The catalysed reaction is ssDNA + n NTP = ssDNA/pppN(pN)n-1 hybrid + (n-1) diphosphate.. Functionally, RNA polymerase that catalyzes the synthesis of short RNA molecules used as primers for DNA polymerase during DNA replication. This Rickettsia prowazekii (strain Madrid E) protein is DNA primase.